The following is a 338-amino-acid chain: MLQKPKSVKLRALRSPRKFGVAGRSCQEVLRKGCLRFQLPERGSRLCLYEDGTELTEDYFPSVPDNAELVLLTLGQAWQGYVSDIRRFLSAFHEPQVGLIQAAQQLLCDEQAPQRQRLLADLLHNVSQNIAAETRAEDPPWFEGLESRFQSKSGYLRYSCESRIRSYLREVSSYPSTVGAEAQEEFLRVLGSMCQRLRSMQYNGSYFDRGAKGGSRLCTPEGWFSCQGPFDMDSCLSRHSINPYSNRESRILFSTWNLDHIIEKKRTIIPTLVEAIKEQDGREVDWEYFYGLLFTSENLKLVHIVCHKKTTHKLNCDPSRIYKPQTRLKRKQPVRKRQ.

A CIDE-N domain is found at 4–80 (KPKSVKLRAL…LLTLGQAWQG (77 aa)).

In terms of assembly, heterodimer of DFFA and DFFB. Interacts with H1-1.

It localises to the cytoplasm. The protein resides in the nucleus. Its activity is regulated as follows. Inhibited by DFFA (DFF45). In terms of biological role, nuclease that induces DNA fragmentation and chromatin condensation during apoptosis. Degrades naked DNA and induces apoptotic morphology. The chain is DNA fragmentation factor subunit beta (DFFB) from Homo sapiens (Human).